A 527-amino-acid chain; its full sequence is Secologanin synthase 2 (527 aa).

Over 1-11 (MEMDMDIIRKA) the chain is Lumenal. A helical membrane pass occupies residues 12–32 (IAATIFALVMAWAWRVLDWAW). Topologically, residues 33–527 (FTPKRIEKRL…IYKKLERQNF (495 aa)) are cytoplasmic. Cys470 contributes to the heme binding site.

The protein belongs to the cytochrome P450 family. Heme serves as cofactor. As to expression, expressed in leaves (especially in leaf epidermis), and, to a lower extent, in roots, stems, flower buds and flowers.

It localises to the endoplasmic reticulum membrane. The catalysed reaction is loganin + reduced [NADPH--hemoprotein reductase] + O2 = secologanin + oxidized [NADPH--hemoprotein reductase] + 2 H2O + H(+). The enzyme catalyses secologanin + reduced [NADPH--hemoprotein reductase] + O2 = secoxyloganin + oxidized [NADPH--hemoprotein reductase] + H2O + 2 H(+). It functions in the pathway alkaloid biosynthesis. In terms of biological role, component of the seco-iridoid and derivatives monoterpenoid indole alkaloids (MIAs, e.g. secologanin) biosynthesis pathway. Catalyzes the conversion of loganin into secologanin. Catalyzes the conversion of secologanin into secoxyloganin. This is Secologanin synthase 2 from Catharanthus roseus (Madagascar periwinkle).